Reading from the N-terminus, the 433-residue chain is Mitochondrial distribution and morphology protein 12 (433 aa).

The 433-residue stretch at 1–433 (MSIDIDWERA…VYPSFWTFLI (433 aa)) folds into the SMP-LTD domain. Disordered regions lie at residues 62–113 (LSDP…GGQM), 180–279 (TPLG…RMRE), and 356–376 (GPET…SPRR). The span at 81 to 96 (SEERSPTREPVDRYGN) shows a compositional bias: basic and acidic residues. Over residues 214–236 (SAQSRPSTANTGNTLPSRDSMSV) the composition is skewed to polar residues. Basic and acidic residues predominate over residues 268–279 (PLDDTPPRRMRE).

This sequence belongs to the MDM12 family. Component of the ER-mitochondria encounter structure (ERMES) or MDM complex, composed of MMM1, MDM10, MDM12 and MDM34. An MMM1 homodimer associates with one molecule of MDM12 on each side in a pairwise head-to-tail manner, and the SMP-LTD domains of MMM1 and MDM12 generate a continuous hydrophobic tunnel for phospholipid trafficking.

The protein localises to the mitochondrion outer membrane. It localises to the endoplasmic reticulum membrane. Its function is as follows. Component of the ERMES/MDM complex, which serves as a molecular tether to connect the endoplasmic reticulum (ER) and mitochondria. Components of this complex are involved in the control of mitochondrial shape and protein biogenesis, and function in nonvesicular lipid trafficking between the ER and mitochondria. MDM12 is required for the interaction of the ER-resident membrane protein MMM1 and the outer mitochondrial membrane-resident beta-barrel protein MDM10. The MDM12-MMM1 subcomplex functions in the major beta-barrel assembly pathway that is responsible for biogenesis of all mitochondrial outer membrane beta-barrel proteins, and acts in a late step after the SAM complex. The MDM10-MDM12-MMM1 subcomplex further acts in the TOM40-specific pathway after the action of the MDM12-MMM1 complex. Essential for establishing and maintaining the structure of mitochondria and maintenance of mtDNA nucleoids. In Ajellomyces capsulatus (strain NAm1 / WU24) (Darling's disease fungus), this protein is Mitochondrial distribution and morphology protein 12.